We begin with the raw amino-acid sequence, 85 residues long: Small ribosomal subunit protein uS17 (85 aa).

This sequence belongs to the universal ribosomal protein uS17 family. Part of the 30S ribosomal subunit.

One of the primary rRNA binding proteins, it binds specifically to the 5'-end of 16S ribosomal RNA. This Pseudoalteromonas translucida (strain TAC 125) protein is Small ribosomal subunit protein uS17.